We begin with the raw amino-acid sequence, 300 residues long: F-box/LRR-repeat protein 15 (300 aa).

The residue at position 1 (M1) is an N-acetylmethionine. In terms of domain architecture, F-box spans 19–66 (FLDLPWEDVLLPHVLNRVPLRQLLRLQRVSRAFRSLVQLHLAGLRRFD). An interaction with SMURF1 region spans residues 113 to 269 (NPQLRSVALG…ESSLSRLRKR (157 aa)). LRR repeat units follow at residues 141–162 (RLQR…RGLA), 167–188 (ALEE…VYLA), 194–215 (GLRS…QELA), 220–241 (ELHH…RTLA), and 246–267 (VLRS…SRLR).

The protein belongs to the FBXL15 family. Part of the SCF (SKP1-CUL1-F-box) E3 ubiquitin-protein ligase complex SCF(FBXL15) composed of CUL1, SKP1, RBX1 and FBXL15.

The protein localises to the cytoplasm. It functions in the pathway protein modification; protein ubiquitination. Functionally, substrate recognition component of a SCF (SKP1-CUL1-F-box protein) E3 ubiquitin-protein ligase complex which mediates the ubiquitination and subsequent proteasomal degradation of SMURF1, thereby acting as a positive regulator of the BMP signaling pathway. Required for dorsal/ventral pattern formation and bone mass maintenance. Also mediates ubiquitination of SMURF2 and WWP2. This Homo sapiens (Human) protein is F-box/LRR-repeat protein 15 (FBXL15).